Consider the following 156-residue polypeptide: Small ribosomal subunit protein bS16 (156 aa).

The disordered stretch occupies residues 114 to 156; sequence ENEPVAEAITPKKKKAAKADEAKAEDTAADAEAPAADAEAADK. The segment covering 130–139 has biased composition (basic and acidic residues); the sequence is AKADEAKAED. Positions 143-156 are enriched in low complexity; sequence DAEAPAADAEAADK.

The protein belongs to the bacterial ribosomal protein bS16 family.

This Rhodococcus erythropolis (strain PR4 / NBRC 100887) protein is Small ribosomal subunit protein bS16.